Consider the following 199-residue polypeptide: Protein p2 (199 aa).

The protein resides in the host cytoplasm. This Avena sativa (Oat) protein is Protein p2.